The chain runs to 253 residues: Major prion protein (253 aa).

The N-terminal stretch at 1–22 is a signal peptide; it reads MANLGCWMLVLFVATWSNLGLC. Residues 23 to 38 form an interaction with ADGRG6 region; it reads KKRPKPGGWNTGGSRY. Positions 23 to 230 are interaction with GRB2, ERI3 and SYN1; sequence KKRPKPGGWN…ESQAYYQRGS (208 aa). The disordered stretch occupies residues 25-108; it reads RPKPGGWNTG…WNKPSKPKTN (84 aa). Repeat copies occupy residues 51 to 59, 60 to 67, 68 to 75, 76 to 83, and 84 to 91. Residues 51–91 are 5 X 8 AA tandem repeats of P-H-G-G-G-W-G-Q; the sequence is PQGGGGWGQPHGGGWGQPHGGGWGQPHGGGWGQPHGGGWGQ. Gly residues predominate over residues 52-95; sequence QGGGGWGQPHGGGWGQPHGGGWGQPHGGGWGQPHGGGWGQGGGT. Cu(2+) is bound by residues His-61, Gly-62, Gly-63, His-69, Gly-70, Gly-71, His-77, Gly-78, Gly-79, His-85, Gly-86, and Gly-87. The cysteines at positions 179 and 214 are disulfide-linked. N-linked (GlcNAc...) asparagine glycans are attached at residues Asn-181 and Asn-197. A lipid anchor (GPI-anchor amidated serine) is attached at Ser-230. A propeptide spans 231-253 (removed in mature form); sequence SMVLFSSPPVILLISFLIFLIVG.

Belongs to the prion family. Monomer and homodimer. Has a tendency to aggregate into amyloid fibrils containing a cross-beta spine, formed by a steric zipper of superposed beta-strands. Soluble oligomers may represent an intermediate stage on the path to fibril formation. Copper binding may promote oligomerization. Interacts with GRB2, APP, ERI3/PRNPIP and SYN1. Mislocalized cytosolically exposed PrP interacts with MGRN1; this interaction alters MGRN1 subcellular location and causes lysosomal enlargement. Interacts with APP. Interacts with KIAA1191. Interacts with ADGRG6.

It is found in the cell membrane. It localises to the golgi apparatus. In terms of biological role, its primary physiological function is unclear. May play a role in neuronal development and synaptic plasticity. May be required for neuronal myelin sheath maintenance. May promote myelin homeostasis through acting as an agonist for ADGRG6 receptor. May play a role in iron uptake and iron homeostasis. Soluble oligomers are toxic to cultured neuroblastoma cells and induce apoptosis (in vitro). Association with GPC1 (via its heparan sulfate chains) targets PRNP to lipid rafts. Also provides Cu(2+) or Zn(2+) for the ascorbate-mediated GPC1 deaminase degradation of its heparan sulfate side chains. The sequence is that of Major prion protein (PRNP) from Pongo pygmaeus (Bornean orangutan).